The primary structure comprises 422 residues: Probable protease eep (422 aa).

His18 is a binding site for Zn(2+). The active site involves Glu19. Residue His22 coordinates Zn(2+). The next 3 helical transmembrane spans lie at 176-196 (FAGPMNNFILGFILFTLAVFL), 349-369 (VVFLMAMLSMNLGIINLLPIP), and 394-414 (EGIITLIGFGFVMVLMVLVTW). A PDZ domain is found at 179–273 (PMNNFILGFI…EEQLTVTPEK (95 aa)).

This sequence belongs to the peptidase M50B family. It depends on Zn(2+) as a cofactor.

It localises to the cell membrane. Involved in production of the peptide pheromone cAD1. This Enterococcus faecalis (strain ATCC 700802 / V583) protein is Probable protease eep (eep).